The sequence spans 2471 residues: Histidine protein kinase 1 (2471 aa).

Polar residues predominate over residues 1–10 (MSMNFFNSSE). 3 disordered regions span residues 1 to 30 (MSMN…TEHY), 52 to 75 (ETKK…VPPS), and 395 to 415 (RQGS…FNIG). Over residues 11–30 (PARDHKPDQEKETVMTTEHY) the composition is skewed to basic and acidic residues. A Protein kinase domain is found at 358-636 (EHPSQSTDQK…DCHSLLHDLI (279 aa)). The Histidine kinase domain maps to 2004 to 2225 (NMSHEIRTPF…TFYVSVIMDA (222 aa)). Histidine 2007 is subject to Phosphohistidine; by autocatalysis. The Response regulatory domain maps to 2340 to 2466 (RILLAEDNLL…ELRRILTKVG (127 aa)). Aspartate 2394 carries the post-translational modification 4-aspartylphosphate.

In terms of processing, the phosphorelay mechanism involves the sequential transfer of a phosphate group from His-2007 (H1) in the histidine kinase domain (transmitter domain) to Asp-2394 (D1) of the response regulatory domain (receiver domain). This transfer probably occurs between two CHK1 molecules, rather than intramolecularly.

The enzyme catalyses ATP + protein L-histidine = ADP + protein N-phospho-L-histidine.. Histidine kinase involved in a two-component signaling pathway that regulates cell wall mannan and glucan biosynthesis. Regulates quorum sensing as well as hyphal formation, biofilm formation, chlamidospore formation, and virulence. Plays a prominent role in phagocyte activation. Involved in the covering of the most potent pro-inflammatory cell wall molecules, the beta-glucans, underneath a dense mannan layer, so that the pathogen becomes partly invisible for immune cells such as phagocytes. This chain is Histidine protein kinase 1 (CHK1), found in Candida albicans (strain SC5314 / ATCC MYA-2876) (Yeast).